The following is a 217-amino-acid chain: LexA repressor (217 aa).

The segment at residues F26–K46 is a DNA-binding region (H-T-H motif). Active-site for autocatalytic cleavage activity residues include S138 and K176.

The protein belongs to the peptidase S24 family. Homodimer.

It catalyses the reaction Hydrolysis of Ala-|-Gly bond in repressor LexA.. Its function is as follows. Represses a number of genes involved in the response to DNA damage (SOS response), including recA and lexA. In the presence of single-stranded DNA, RecA interacts with LexA causing an autocatalytic cleavage which disrupts the DNA-binding part of LexA, leading to derepression of the SOS regulon and eventually DNA repair. In Zymomonas mobilis subsp. mobilis (strain ATCC 31821 / ZM4 / CP4), this protein is LexA repressor.